Consider the following 397-residue polypeptide: Argininosuccinate synthase (397 aa).

Residue 8-16 (AYSGGLDTS) coordinates ATP. Tyr86 and Ser91 together coordinate L-citrulline. Residue Gly116 participates in ATP binding. Residues Thr118, Asn122, and Asp123 each contribute to the L-aspartate site. Asn122 provides a ligand contact to L-citrulline. 5 residues coordinate L-citrulline: Arg126, Ser175, Ser184, Glu260, and Tyr272.

This sequence belongs to the argininosuccinate synthase family. Type 1 subfamily. In terms of assembly, homotetramer.

It is found in the cytoplasm. It carries out the reaction L-citrulline + L-aspartate + ATP = 2-(N(omega)-L-arginino)succinate + AMP + diphosphate + H(+). It participates in amino-acid biosynthesis; L-arginine biosynthesis; L-arginine from L-ornithine and carbamoyl phosphate: step 2/3. The protein is Argininosuccinate synthase of Clostridium botulinum (strain 657 / Type Ba4).